Consider the following 84-residue polypeptide: Large ribosomal subunit protein bL27 (84 aa).

The segment at 1-24 is disordered; that stretch reads MAHKKGGGSSKNGRDSNSQRLGVK.

Belongs to the bacterial ribosomal protein bL27 family.

The protein is Large ribosomal subunit protein bL27 of Leptospira borgpetersenii serovar Hardjo-bovis (strain JB197).